We begin with the raw amino-acid sequence, 551 residues long: Glucose-6-phosphate isomerase (551 aa).

Glu-356 (proton donor) is an active-site residue. Residues His-387 and Lys-515 contribute to the active site.

It belongs to the GPI family.

The protein localises to the cytoplasm. It carries out the reaction alpha-D-glucose 6-phosphate = beta-D-fructose 6-phosphate. Its pathway is carbohydrate biosynthesis; gluconeogenesis. The protein operates within carbohydrate degradation; glycolysis; D-glyceraldehyde 3-phosphate and glycerone phosphate from D-glucose: step 2/4. Functionally, catalyzes the reversible isomerization of glucose-6-phosphate to fructose-6-phosphate. This Blochmanniella pennsylvanica (strain BPEN) protein is Glucose-6-phosphate isomerase.